Reading from the N-terminus, the 230-residue chain is Ribose-5-phosphate isomerase A (230 aa).

Substrate-binding positions include Thr-31–Thr-34, Asp-88–Asp-91, and Lys-101–Gly-104. Residue Glu-110 is the Proton acceptor of the active site. Lys-128 is a binding site for substrate.

This sequence belongs to the ribose 5-phosphate isomerase family. As to quaternary structure, homodimer.

The enzyme catalyses aldehydo-D-ribose 5-phosphate = D-ribulose 5-phosphate. It participates in carbohydrate degradation; pentose phosphate pathway; D-ribose 5-phosphate from D-ribulose 5-phosphate (non-oxidative stage): step 1/1. Its function is as follows. Catalyzes the reversible conversion of ribose-5-phosphate to ribulose 5-phosphate. The polypeptide is Ribose-5-phosphate isomerase A (Lactobacillus helveticus (strain DPC 4571)).